The following is a 476-amino-acid chain: Monofunctional riboflavin biosynthesis protein RIBA 2, chloroplastic (476 aa).

A chloroplast-targeting transit peptide spans Met1–Phe54. Positions Met44 to Lys306 are DHBP synthase. D-ribulose 5-phosphate is bound by residues Arg130–Glu131, Asp135, Arg245–Thr249, and Glu269. Residue Glu131 coordinates Mg(2+). His248 provides a ligand contact to Mg(2+). Residues Arg307–Pro476 form an inactive GTP cyclohydrolase II region. GTP-binding positions include Arg357–Glu361, Gln376, Glu399–Lys401, and Thr450.

The protein in the N-terminal section; belongs to the DHBP synthase family. It in the C-terminal section; belongs to the GTP cyclohydrolase II family. The cofactor is Mg(2+). It depends on Mn(2+) as a cofactor. As to expression, expressed in leaves, shoots, roots, flowers and siliques.

It localises to the plastid. The protein resides in the chloroplast. The enzyme catalyses D-ribulose 5-phosphate = (2S)-2-hydroxy-3-oxobutyl phosphate + formate + H(+). Its pathway is cofactor biosynthesis; riboflavin biosynthesis; 2-hydroxy-3-oxobutyl phosphate from D-ribulose 5-phosphate: step 1/1. Its function is as follows. Involved in riboflavin biosynthesis. Catalyzes the conversion of D-ribulose 5-phosphate to formate and 3,4-dihydroxy-2-butanone 4-phosphate. RIBA2 and RIBA3 together are not able to complement the loss of function of RIBA1. The chain is Monofunctional riboflavin biosynthesis protein RIBA 2, chloroplastic (RIBA2) from Arabidopsis thaliana (Mouse-ear cress).